A 261-amino-acid polypeptide reads, in one-letter code: Hemin import ATP-binding protein HmuV (261 aa).

Residues 7-243 form the ABC transporter domain; sequence LRGQNLSLQF…EIIDAVYGYK (237 aa). 39 to 46 contacts ATP; the sequence is GPNGAGKS.

This sequence belongs to the ABC transporter superfamily. Heme (hemin) importer (TC 3.A.1.14.5) family. As to quaternary structure, the complex is composed of two ATP-binding proteins (HmuV), two transmembrane proteins (HmuU) and a solute-binding protein (HmuT).

The protein localises to the cell inner membrane. Functionally, part of the ABC transporter complex HmuTUV involved in hemin import. Responsible for energy coupling to the transport system. The chain is Hemin import ATP-binding protein HmuV from Vibrio vulnificus (strain CMCP6).